The sequence spans 217 residues: MRLILLGPPGAGKGTQANFIKEKFGIPQISTGDMLRAAVKAGTPLGVEAKKVMDAGGLVSDDIIIGLVKDRLKEDDCKSGYMFDGFPRTIPQADAMKEAGVPIDFVLEIDVPDSEIIERMSGRRAHLASGRTYHVKYNPPKVAGKDDLTGEDLVQRDDDREETVAKRLEVYHSQTKPLVEYYSKWAASGEPGTPKVRKISGLGAVDEITSRAFAALK.

ATP is bound at residue 10-15; it reads GAGKGT. Positions 30–59 are NMP; sequence STGDMLRAAVKAGTPLGVEAKKVMDAGGLV. Residues T31, R36, 57 to 59, 85 to 88, and Q92 each bind AMP; these read GLV and GFPR. Positions 122 to 159 are LID; that stretch reads GRRAHLASGRTYHVKYNPPKVAGKDDLTGEDLVQRDDD. ATP is bound by residues R123 and 132 to 133; that span reads TY. Residues R156 and R167 each coordinate AMP. G203 is a binding site for ATP.

Belongs to the adenylate kinase family. Monomer.

Its subcellular location is the cytoplasm. It catalyses the reaction AMP + ATP = 2 ADP. The protein operates within purine metabolism; AMP biosynthesis via salvage pathway; AMP from ADP: step 1/1. In terms of biological role, catalyzes the reversible transfer of the terminal phosphate group between ATP and AMP. Plays an important role in cellular energy homeostasis and in adenine nucleotide metabolism. The protein is Adenylate kinase of Aromatoleum aromaticum (strain DSM 19018 / LMG 30748 / EbN1) (Azoarcus sp. (strain EbN1)).